The primary structure comprises 178 residues: Interleukin-10 (178 aa).

The first 18 residues, 1–18, serve as a signal peptide directing secretion; the sequence is MPRSALLCCLILLAGVAA. 2 disulfide bridges follow: C30–C126 and C80–C132. Residue N134 is glycosylated (N-linked (GlcNAc...) asparagine).

It belongs to the IL-10 family. Homodimer. Interacts with IL10RA and IL10RB.

It localises to the secreted. Functionally, major immune regulatory cytokine that acts on many cells of the immune system where it has profound anti-inflammatory functions, limiting excessive tissue disruption caused by inflammation. Mechanistically, IL10 binds to its heterotetrameric receptor comprising IL10RA and IL10RB leading to JAK1 and STAT2-mediated phosphorylation of STAT3. In turn, STAT3 translocates to the nucleus where it drives expression of anti-inflammatory mediators. Targets antigen-presenting cells (APCs) such as macrophages and monocytes and inhibits their release of pro-inflammatory cytokines including granulocyte-macrophage colony-stimulating factor /GM-CSF, granulocyte colony-stimulating factor/G-CSF, IL-1 alpha, IL-1 beta, IL-6, IL-8 and TNF-alpha. Also interferes with antigen presentation by reducing the expression of MHC-class II and co-stimulatory molecules, thereby inhibiting their ability to induce T cell activation. In addition, controls the inflammatory response of macrophages by reprogramming essential metabolic pathways including mTOR signaling. This chain is Interleukin-10 (IL10), found in Lama glama (Llama).